A 284-amino-acid chain; its full sequence is MTIVNLAAYHFVSLDANEQWRPLVTARCNELGLRGTILLAPEGINLFIAGTREATDAFIAYIRHDPLFEGKFATLQFKESLSDSQPFRRMLVRLKREIITMKKPAIKPELGRAPFVDARTLKAWLDRGHDDAGRPVVMLDTRNAFEVDVGTFDNALDYRIDKFSEFPEVIDANRADLEGKTVVSFCTGGIRCEKAAIHMKEIGIDNVYQLEGGILKYFEEVGGAHYHGDCFVFDYRTALNPQLQPTENVTCFACRAVVTPEAQQSPSYVPGKSCPACPQAASAA.

Residues 132-226 form the Rhodanese domain; the sequence is AGRPVVMLDT…YFEEVGGAHY (95 aa). Cysteine 186 acts as the Cysteine persulfide intermediate in catalysis.

This sequence belongs to the TrhO family.

It carries out the reaction uridine(34) in tRNA + AH2 + O2 = 5-hydroxyuridine(34) in tRNA + A + H2O. Functionally, catalyzes oxygen-dependent 5-hydroxyuridine (ho5U) modification at position 34 in tRNAs. The protein is tRNA uridine(34) hydroxylase of Burkholderia cenocepacia (strain HI2424).